Consider the following 969-residue polypeptide: Protein translocase subunit SecA (969 aa).

Residues glutamine 99, 117 to 121 (GEGKT), and aspartate 631 each bind ATP.

The protein belongs to the SecA family. As to quaternary structure, monomer and homodimer. Part of the essential Sec protein translocation apparatus which comprises SecA, SecYEG and auxiliary proteins SecDF. Other proteins may also be involved.

It is found in the cell inner membrane. It localises to the cytoplasm. It carries out the reaction ATP + H2O + cellular proteinSide 1 = ADP + phosphate + cellular proteinSide 2.. Functionally, part of the Sec protein translocase complex. Interacts with the SecYEG preprotein conducting channel. Has a central role in coupling the hydrolysis of ATP to the transfer of proteins into and across the cell membrane, serving as an ATP-driven molecular motor driving the stepwise translocation of polypeptide chains across the membrane. This is Protein translocase subunit SecA from Chlamydia trachomatis serovar L2 (strain ATCC VR-902B / DSM 19102 / 434/Bu).